The sequence spans 433 residues: Shikimate O-hydroxycinnamoyltransferase (433 aa).

Catalysis depends on H153, which acts as the Proton acceptor. 4-coumaroyl-CoA-binding positions include S252–E255, D284–R290, and S370–R373. The Proton acceptor role is filled by D380.

The protein belongs to the plant acyltransferase family.

It catalyses the reaction shikimate + 4-coumaroyl-CoA = trans-4-coumaroylshikimate + CoA. Acyltransferase involved in the biosynthesis of lignin. Accepts caffeoyl-CoA and p-coumaroyl-CoA as substrates and transfers the acyl group on both shikimate and quinate acceptors. The sequence is that of Shikimate O-hydroxycinnamoyltransferase (HST) from Arabidopsis thaliana (Mouse-ear cress).